The chain runs to 111 residues: UPF0321 protein P20C8.02c (111 aa).

A signal peptide spans M1 to A17. N20 carries an N-linked (GlcNAc...) asparagine glycan.

Belongs to the UPF0321 family.

In Schizosaccharomyces pombe (strain 972 / ATCC 24843) (Fission yeast), this protein is UPF0321 protein P20C8.02c.